A 176-amino-acid polypeptide reads, in one-letter code: Ribosome maturation factor RimM (176 aa).

Residues 96–176 (PADEFYWRDL…QILVDWDPDF (81 aa)) form the PRC barrel domain.

Belongs to the RimM family. Binds ribosomal protein uS19.

It is found in the cytoplasm. An accessory protein needed during the final step in the assembly of 30S ribosomal subunit, possibly for assembly of the head region. Essential for efficient processing of 16S rRNA. May be needed both before and after RbfA during the maturation of 16S rRNA. It has affinity for free ribosomal 30S subunits but not for 70S ribosomes. This Shewanella baltica (strain OS223) protein is Ribosome maturation factor RimM.